The sequence spans 765 residues: Transient receptor potential cation channel subfamily V member 6 (765 aa).

Topologically, residues M1–P367 are cytoplasmic. ANK repeat units follow at residues I84–Q114, M118–F147, and E156–A185. The interval E133–P143 is interaction with calmodulin. Phosphotyrosine; by SRC is present on Y201. ANK repeat units follow at residues F202 to A231, L235 to N277, and Q279 to W308. Residues Y368 to I388 traverse the membrane as a helical segment. At Y389 to R425 the chain is on the extracellular side. A glycan (N-linked (GlcNAc...) asparagine) is linked at N398. Residues L426–F448 traverse the membrane as a helical segment. The Cytoplasmic segment spans residues R449 to G463. The chain crosses the membrane as a helical span at residues P464 to R483. Topologically, residues L484–G489 are extracellular. Residues E490–A509 traverse the membrane as a helical segment. Residues R510 to D529 lie on the Cytoplasmic side of the membrane. The chain crosses the membrane as a helical span at residues L530–F552. Residues Q553–D565 lie on the Extracellular side of the membrane. The segment at residues Y566–A585 is an intramembrane region (pore-forming). The short motif at I581–A585 is the Selectivity filter element. Residue D582 coordinates Ca(2+). Topologically, residues N586–S596 are extracellular. A helical transmembrane segment spans residues I597 to M617. The Cytoplasmic segment spans residues M618–I765. The tract at residues V638–V642 is interaction with S100A10. The interval S731–I751 is interaction with calmodulin. Phosphothreonine; by PKC/PRKCA is present on T742.

The protein belongs to the transient receptor (TC 1.A.4) family. TrpV subfamily. TRPV6 sub-subfamily. In terms of assembly, homotetramer. Probably also forms heterotetramers with TRPV5. Interacts with TRPV5. Interacts with S100A10 and probably with the ANAX2-S100A10 heterotetramer. The interaction with S100A10 is required for the trafficking to the plasma membrane. Interacts with BSPRY. Interacts with TCAF1 and TCAF2 isoform 2. Interacts with calmodulin. Post-translationally, glycosylated. Phosphorylation at Tyr-201 by SRC leads to an increased calcium influx through the channel. Probably dephosphorylated at this site by PTPN1. Phosphorylation by PRKCA at the calmodulin binding site delays channel inactivation. Expressed at high levels in the gastrointestinal tract, including esophagus, stomach, duodenum, jejunum, ileum and colon, and in pancreas, placenta, prostate and salivary gland. Expressed at moderate levels in liver, kidney and testis. Expressed in trophoblasts of placenta villus trees (at protein level). Expressed in locally advanced prostate cancer, metastatic and androgen-insensitive prostatic lesions but not detected in healthy prostate tissue and benign prostatic hyperplasia.

The protein resides in the cell membrane. The enzyme catalyses Ca(2+)(in) = Ca(2+)(out). Functionally, calcium selective cation channel that mediates Ca(2+) uptake in various tissues, including the intestine. Important for normal Ca(2+) ion homeostasis in the body, including bone and skin. The channel is activated by low internal calcium level, probably including intracellular calcium store depletion, and the current exhibits an inward rectification. Inactivation includes both a rapid Ca(2+)-dependent and a slower Ca(2+)-calmodulin-dependent mechanism; the latter may be regulated by phosphorylation. In vitro, is slowly inhibited by Mg(2+) in a voltage-independent manner. Heteromeric assembly with TRPV5 seems to modify channel properties. TRPV5-TRPV6 heteromultimeric concatemers exhibit voltage-dependent gating. This is Transient receptor potential cation channel subfamily V member 6 (TRPV6) from Homo sapiens (Human).